The following is a 326-amino-acid chain: Phospho-N-acetylmuramoyl-pentapeptide-transferase (326 aa).

A run of 10 helical transmembrane segments spans residues 2–22, 51–71, 73–93, 113–133, 143–163, 175–195, 199–219, 225–245, 250–270, and 305–325; these read ILAT…FPYF, VPPM…LLWA, LTPE…LGFI, ILIQ…YSAE, GVII…IVGS, GLAA…AYIT, MNIT…LWFN, IFMG…TSVL, MLFA…IIQI, and VIVM…ITFL.

It belongs to the glycosyltransferase 4 family. MraY subfamily. It depends on Mg(2+) as a cofactor.

The protein resides in the cell membrane. The catalysed reaction is UDP-N-acetyl-alpha-D-muramoyl-L-alanyl-gamma-D-glutamyl-meso-2,6-diaminopimeloyl-D-alanyl-D-alanine + di-trans,octa-cis-undecaprenyl phosphate = di-trans,octa-cis-undecaprenyl diphospho-N-acetyl-alpha-D-muramoyl-L-alanyl-D-glutamyl-meso-2,6-diaminopimeloyl-D-alanyl-D-alanine + UMP. It functions in the pathway cell wall biogenesis; peptidoglycan biosynthesis. Functionally, catalyzes the initial step of the lipid cycle reactions in the biosynthesis of the cell wall peptidoglycan: transfers peptidoglycan precursor phospho-MurNAc-pentapeptide from UDP-MurNAc-pentapeptide onto the lipid carrier undecaprenyl phosphate, yielding undecaprenyl-pyrophosphoryl-MurNAc-pentapeptide, known as lipid I. This Wolbachia pipientis wMel protein is Phospho-N-acetylmuramoyl-pentapeptide-transferase.